A 391-amino-acid polypeptide reads, in one-letter code: uncharacterized protein (391 aa).

2 WD repeats span residues 137–179 and 182–222; these read VNDI…PILA and PLSS…SAEE.

Its subcellular location is the cytoplasm. It localises to the nucleus. This is an uncharacterized protein from Schizosaccharomyces pombe (strain 972 / ATCC 24843) (Fission yeast).